The sequence spans 221 residues: Carbonic anhydrase (221 aa).

Residues Cys38, Asp40, His99, and Cys102 each coordinate Zn(2+).

The protein belongs to the beta-class carbonic anhydrase family. Requires Zn(2+) as cofactor.

It carries out the reaction hydrogencarbonate + H(+) = CO2 + H2O. This is Carbonic anhydrase (cynT) from Helicobacter pylori (strain J99 / ATCC 700824) (Campylobacter pylori J99).